A 407-amino-acid polypeptide reads, in one-letter code: Vancomycin aglycone glucosyltransferase (407 aa).

Belongs to the glycosyltransferase 28 family.

It carries out the reaction vancomycin aglycone + UDP-alpha-D-glucose = devancoaminyl-vancomycin + UDP. It functions in the pathway antibiotic biosynthesis; vancomycin biosynthesis. Glucosyltransferase that transfers glucose to the 4-OH-Phegly(4) residue of vancomycin aglycone (AGV) to produce devancoaminyl-vancomycin (DVV) in the biosynthesis of glycopeptide antibiotic chloroeremomycin, a member of the vancomycin group of antibiotics. The polypeptide is Vancomycin aglycone glucosyltransferase (gtfB) (Amycolatopsis orientalis (Nocardia orientalis)).